The following is a 460-amino-acid chain: MKKLFECIPENYFNLFAGKNRGFYAEVAFLLYEQFHINRAGILYSLMKDEVQELIETKEELGECIDIEDEIEEKEQDSAGRANEVLRRLKKLKWIDVEVRDQFEEFIVLPVYSSRILAVLKEICENRTIEYQRYCFTTYQLLTGVEAEERPASAILESEKYSEQLYDELTILLHNMKNHMETIAAKDDIQQVLEHHFGEYKKDIIDKSYHRLRTSDHVSRYRNKILERIQTWFLDDKFMKRAAEDAVESGYSANWEEAMDGLSKKMYRVEEIYSNLDEICNQIDARHYQYLRAVLDRSRYLSTYNDSINYKISYILEHIGQMDENILDSSLFRLVQLRQLQEASLLSPRKKKGVYEPEQHEVNEISDEMREELKAENIRRMEKVMNRKKIQKFVLEAMKGRQEIEMSELNLQNEDDALYLIYVYLYGYSKGTGYKLSEEPPEFITQKGYTFSNRTIKREN.

Functionally, component of antiplasmid transformation system Wadjet type I, composed of JetA, JetB, JetC and JetD. Expression of Wadjet type I in B.subtilis (strain BEST7003) reduces the transformation efficiency of plasmid pHCMC05. This Bacillus cereus (strain Q1) protein is Wadjet protein JetA.